Consider the following 194-residue polypeptide: uncharacterized protein (194 aa).

This is an uncharacterized protein from Ostreid herpesvirus 1 (isolate France) (OsHV-1).